The primary structure comprises 489 residues: Aspartate/glutamate permease AcaP (489 aa).

Transmembrane regions (helical) follow at residues 6-26 (IRWF…GNVV), 36-56 (VVTS…LIVG), 91-111 (VVHI…FGWV), 122-142 (MSMT…LWLS), 152-172 (IGGL…VMAI), 195-215 (IPKF…AVGG), 238-258 (FLLA…MGMI), 290-310 (LMIV…AFSI), 342-362 (GYTL…LGIG), 373-393 (NLNS…FIML), 413-433 (AMIA…LGMV), and 449-469 (LASN…LPFI).

Belongs to the amino acid-polyamine-organocation (APC) superfamily. Glutamate:GABA antiporter (GGA) (TC 2.A.3.7) family.

It localises to the cell membrane. In terms of biological role, involved in aspartate and glutamate uptake. Plays no significant role in the excretion of accumulated glutamate. In Lactococcus lactis subsp. cremoris (strain MG1363), this protein is Aspartate/glutamate permease AcaP.